Here is a 265-residue protein sequence, read N- to C-terminus: Putative pyruvate, phosphate dikinase regulatory protein 2 (265 aa).

150–157 (GVSRTSKT) is a binding site for ADP.

The protein belongs to the pyruvate, phosphate/water dikinase regulatory protein family. PDRP subfamily.

It catalyses the reaction N(tele)-phospho-L-histidyl/L-threonyl-[pyruvate, phosphate dikinase] + ADP = N(tele)-phospho-L-histidyl/O-phospho-L-threonyl-[pyruvate, phosphate dikinase] + AMP + H(+). The catalysed reaction is N(tele)-phospho-L-histidyl/O-phospho-L-threonyl-[pyruvate, phosphate dikinase] + phosphate + H(+) = N(tele)-phospho-L-histidyl/L-threonyl-[pyruvate, phosphate dikinase] + diphosphate. Bifunctional serine/threonine kinase and phosphorylase involved in the regulation of the pyruvate, phosphate dikinase (PPDK) by catalyzing its phosphorylation/dephosphorylation. The protein is Putative pyruvate, phosphate dikinase regulatory protein 2 of Latilactobacillus sakei subsp. sakei (strain 23K) (Lactobacillus sakei subsp. sakei).